Consider the following 482-residue polypeptide: Nicotine dehydrogenase (482 aa).

A signal peptide (tat-type signal) is located at residues 1-38 (MSDKTKTNEGFSRRSFIGSAAVVTAGVAGLGAIDAASA). The FAD site is built by Ala64, Glu83, Ala84, Arg85, Arg91, Trp108, and Val279. Thr381 lines the (S)-nicotine pocket. FAD is bound by residues Ala453, Asn462, and Ile463.

The protein belongs to the flavin monoamine oxidase family. In terms of assembly, monomer in solution. Homodimer in solution. Forms homodimers in the crystal. FAD serves as cofactor. Post-translationally, predicted to be exported by the Tat system. The position of the signal peptide cleavage has not been experimentally proven.

It localises to the periplasm. The enzyme catalyses (S)-nicotine + 2 Fe(III)-[cytochrome c] = N-methylmyosmine + 2 Fe(II)-[cytochrome c] + 2 H(+). Its pathway is alkaloid degradation; nicotine degradation. Its activity is regulated as follows. The catalytic rate is not significantly affected by pH. Involved in nicotine degradation. Catalyzes the conversion of nicotine to N-methylmyosmine. N-methylmyosmine undergoes spontaneous hydrolysis to form pseudooxynicotine (PN). S-nicotine is the optimal substrate. Has lower activity with some nicotine analogs, but shows no activity towards neurotransmitters, including serotonin, dopamine, and norepinephrine, nicotine metabolites and common neuroactive drugs. The enzyme is stereospecific with poor activity with (R)-nicotine as the substrate. The c-type cytochrome protein CycN is the physiological electron acceptor. O(2) is a poor electron acceptor. The polypeptide is Nicotine dehydrogenase (Pseudomonas putida (strain DSM 28022 / S16)).